The following is a 124-amino-acid chain: Late histone H2A.2.1 (124 aa).

Residues 1-18 (MSGRGKGAKAKSKAKSRS) are compositionally biased toward basic residues. The tract at residues 1–21 (MSGRGKGAKAKSKAKSRSSRA) is disordered. Serine 2 carries the N-acetylserine modification. Phosphoserine is present on serine 2. Glutamine 104 carries the post-translational modification N5-methylglutamine. Residue lysine 119 forms a Glycyl lysine isopeptide (Lys-Gly) (interchain with G-Cter in ubiquitin) linkage.

This sequence belongs to the histone H2A family. In terms of assembly, the nucleosome is a histone octamer containing two molecules each of H2A, H2B, H3 and H4 assembled in one H3-H4 heterotetramer and two H2A-H2B heterodimers. The octamer wraps approximately 147 bp of DNA. Monoubiquitination of Lys-119 gives a specific tag for epigenetic transcriptional repression. Post-translationally, phosphorylation of Ser-2 directly represses transcription.

It is found in the nucleus. The protein localises to the chromosome. In terms of biological role, core component of nucleosome. Nucleosomes wrap and compact DNA into chromatin, limiting DNA accessibility to the cellular machineries which require DNA as a template. Histones thereby play a central role in transcription regulation, DNA repair, DNA replication and chromosomal stability. DNA accessibility is regulated via a complex set of post-translational modifications of histones, also called histone code, and nucleosome remodeling. In Psammechinus miliaris (Green sea urchin), this protein is Late histone H2A.2.1.